The sequence spans 95 residues: MLKSNNASETAAHKVGDKTAKKVFFRRRKGCPLSVSNAPVIDYKNPELLIKFVSEGGRMLPSRITNVCAKKQRKLNNAIKIARILALLPFVFQAK.

Belongs to the bacterial ribosomal protein bS18 family. As to quaternary structure, part of the 30S ribosomal subunit. Forms a tight heterodimer with protein bS6.

Functionally, binds as a heterodimer with protein bS6 to the central domain of the 16S rRNA, where it helps stabilize the platform of the 30S subunit. The protein is Small ribosomal subunit protein bS18 of Rickettsia peacockii (strain Rustic).